The chain runs to 398 residues: 1-deoxy-D-xylulose 5-phosphate reductoisomerase (398 aa).

Residues Thr-11, Gly-12, Ser-13, Ile-14, Arg-38, Asn-39, and Asn-125 each coordinate NADPH. Lys-126 contacts 1-deoxy-D-xylulose 5-phosphate. Glu-127 contacts NADPH. Asp-151 serves as a coordination point for Mn(2+). Residues Ser-152, Glu-153, Ser-179, and His-202 each contribute to the 1-deoxy-D-xylulose 5-phosphate site. A Mn(2+)-binding site is contributed by Glu-153. Residue Gly-208 coordinates NADPH. 1-deoxy-D-xylulose 5-phosphate contacts are provided by Ser-215, Asn-220, Lys-221, and Glu-224. Glu-224 is a Mn(2+) binding site.

This sequence belongs to the DXR family. Requires Mg(2+) as cofactor. Mn(2+) serves as cofactor.

The enzyme catalyses 2-C-methyl-D-erythritol 4-phosphate + NADP(+) = 1-deoxy-D-xylulose 5-phosphate + NADPH + H(+). It participates in isoprenoid biosynthesis; isopentenyl diphosphate biosynthesis via DXP pathway; isopentenyl diphosphate from 1-deoxy-D-xylulose 5-phosphate: step 1/6. Its function is as follows. Catalyzes the NADPH-dependent rearrangement and reduction of 1-deoxy-D-xylulose-5-phosphate (DXP) to 2-C-methyl-D-erythritol 4-phosphate (MEP). This is 1-deoxy-D-xylulose 5-phosphate reductoisomerase from Burkholderia lata (strain ATCC 17760 / DSM 23089 / LMG 22485 / NCIMB 9086 / R18194 / 383).